Reading from the N-terminus, the 278-residue chain is 3-oxoacyl-[acyl-carrier-protein] reductase (278 aa).

NADP(+) contacts are provided by T13, R14, I16, S36, S40, T44, D66, F67, E77, G122, Q125, and E126. Residue S182 is the Proton donor of the active site. Y198, K202, L230, and V231 together coordinate NADP(+). Catalysis depends on Y198, which acts as the Proton acceptor. Catalysis depends on K202, which acts as the Lowers pKa of active site Tyr.

The protein belongs to the short-chain dehydrogenases/reductases (SDR) family.

It is found in the mitochondrion. It catalyses the reaction a (3R)-hydroxyacyl-[ACP] + NADP(+) = a 3-oxoacyl-[ACP] + NADPH + H(+). Its pathway is lipid metabolism; fatty acid biosynthesis. In terms of biological role, involved in biosynthesis of fatty acids in mitochondria. The sequence is that of 3-oxoacyl-[acyl-carrier-protein] reductase (OAR1) from Saccharomyces cerevisiae (strain ATCC 204508 / S288c) (Baker's yeast).